A 116-amino-acid polypeptide reads, in one-letter code: uncharacterized protein (116 aa).

A run of 2 helical transmembrane segments spans residues 55 to 77 (LSYS…LYSF) and 87 to 109 (FSYG…YAAL).

The protein resides in the membrane. This is an uncharacterized protein from Saccharomyces cerevisiae (strain ATCC 204508 / S288c) (Baker's yeast).